Here is a 554-residue protein sequence, read N- to C-terminus: Dihydroxy-acid dehydratase (554 aa).

Position 78 (aspartate 78) interacts with Mg(2+). [2Fe-2S] cluster is bound at residue cysteine 119. Mg(2+) is bound by residues aspartate 120 and lysine 121. Lysine 121 carries the N6-carboxylysine modification. Cysteine 191 is a binding site for [2Fe-2S] cluster. Glutamate 444 contacts Mg(2+). Serine 470 (proton acceptor) is an active-site residue.

The protein belongs to the IlvD/Edd family. Homodimer. It depends on [2Fe-2S] cluster as a cofactor. Requires Mg(2+) as cofactor.

It carries out the reaction (2R)-2,3-dihydroxy-3-methylbutanoate = 3-methyl-2-oxobutanoate + H2O. It catalyses the reaction (2R,3R)-2,3-dihydroxy-3-methylpentanoate = (S)-3-methyl-2-oxopentanoate + H2O. It functions in the pathway amino-acid biosynthesis; L-isoleucine biosynthesis; L-isoleucine from 2-oxobutanoate: step 3/4. It participates in amino-acid biosynthesis; L-valine biosynthesis; L-valine from pyruvate: step 3/4. Its function is as follows. Functions in the biosynthesis of branched-chain amino acids. Catalyzes the dehydration of (2R,3R)-2,3-dihydroxy-3-methylpentanoate (2,3-dihydroxy-3-methylvalerate) into 2-oxo-3-methylpentanoate (2-oxo-3-methylvalerate) and of (2R)-2,3-dihydroxy-3-methylbutanoate (2,3-dihydroxyisovalerate) into 2-oxo-3-methylbutanoate (2-oxoisovalerate), the penultimate precursor to L-isoleucine and L-valine, respectively. The protein is Dihydroxy-acid dehydratase of Nitratidesulfovibrio vulgaris (strain ATCC 29579 / DSM 644 / CCUG 34227 / NCIMB 8303 / VKM B-1760 / Hildenborough) (Desulfovibrio vulgaris).